Reading from the N-terminus, the 316-residue chain is Phospho-N-acetylmuramoyl-pentapeptide-transferase (316 aa).

The next 10 membrane-spanning stretches (helical) occupy residues 5–25, 49–69, 76–96, 116–136, 141–161, 172–192, 195–212, 221–241, 244–264, and 296–316; these read IILA…LFIP, GTPT…TLIF, LAIL…DDFL, FLLA…EVIF, TTID…VGTV, GLAA…ALFL, ITYG…LGFL, IFMG…AAVL, LPLI…SVII, and VVYA…YSLS.

Belongs to the glycosyltransferase 4 family. MraY subfamily. The cofactor is Mg(2+).

The protein resides in the cell membrane. The enzyme catalyses UDP-N-acetyl-alpha-D-muramoyl-L-alanyl-gamma-D-glutamyl-meso-2,6-diaminopimeloyl-D-alanyl-D-alanine + di-trans,octa-cis-undecaprenyl phosphate = di-trans,octa-cis-undecaprenyl diphospho-N-acetyl-alpha-D-muramoyl-L-alanyl-D-glutamyl-meso-2,6-diaminopimeloyl-D-alanyl-D-alanine + UMP. It functions in the pathway cell wall biogenesis; peptidoglycan biosynthesis. Catalyzes the initial step of the lipid cycle reactions in the biosynthesis of the cell wall peptidoglycan: transfers peptidoglycan precursor phospho-MurNAc-pentapeptide from UDP-MurNAc-pentapeptide onto the lipid carrier undecaprenyl phosphate, yielding undecaprenyl-pyrophosphoryl-MurNAc-pentapeptide, known as lipid I. The sequence is that of Phospho-N-acetylmuramoyl-pentapeptide-transferase from Thermoanaerobacter pseudethanolicus (strain ATCC 33223 / 39E) (Clostridium thermohydrosulfuricum).